We begin with the raw amino-acid sequence, 332 residues long: Galactosylgalactosylxylosylprotein 3-beta-glucuronosyltransferase 1 (332 aa).

Over 1–6 (MPKRRD) the chain is Cytoplasmic. An essential for transport from endoplasmic reticulum to Golgi apparatus and interaction with SAR1A region spans residues 3-5 (KRR). A helical; Signal-anchor for type II membrane protein membrane pass occupies residues 7 to 27 (ILAIVLIVLPWTLLITVWHQS). At 28 to 332 (TLAPLLAVHK…KGFTDPSVEI (305 aa)) the chain is on the lumenal side. 91–93 (PTY) provides a ligand contact to UDP-alpha-D-glucuronate. Residues threonine 103 and threonine 108 each carry the phosphothreonine modification. Aspartate 122 serves as a coordination point for UDP-alpha-D-glucuronate. Residue asparagine 140 is glycosylated (N-linked (GlcNAc...) asparagine). 2 residues coordinate UDP-alpha-D-glucuronate: arginine 165 and arginine 170. Residue asparagine 184 is glycosylated (N-linked (GlcNAc...) asparagine). 195 to 197 (DDD) provides a ligand contact to UDP-alpha-D-glucuronate. Position 197 (aspartate 197) interacts with Mn(2+). The interval 243-252 (FDPHRPFAID) is interaction with galactose moiety of substrate glycoprotein. Residue glutamate 282 is the Proton donor/acceptor of the active site. The N-linked (GlcNAc...) asparagine glycan is linked to asparagine 301. Residue 309–311 (HTR) coordinates UDP-alpha-D-glucuronate.

It belongs to the glycosyltransferase 43 family. As to quaternary structure, homodimer. Interacts with SAR1A. The cofactor is Mn(2+). Post-translationally, the soluble form derives from the membrane form by proteolytic processing.

Its subcellular location is the golgi apparatus membrane. It is found in the secreted. The enzyme catalyses 3-O-(beta-D-galactosyl-(1-&gt;3)-beta-D-galactosyl-(1-&gt;4)-beta-D-xylosyl)-L-seryl-[protein] + UDP-alpha-D-glucuronate = 3-O-(beta-D-GlcA-(1-&gt;3)-beta-D-Gal-(1-&gt;3)-beta-D-Gal-(1-&gt;4)-beta-D-Xyl)-L-seryl-[protein] + UDP + H(+). It functions in the pathway protein modification; protein glycosylation. Involved in the biosynthesis of L2/HNK-1 carbohydrate epitope on glycoproteins. Can also play a role in glycosaminoglycan biosynthesis. Substrates include asialo-orosomucoid (ASOR), asialo-fetuin, and asialo-neural cell adhesion molecule. Requires sphingomyelin for activity: stearoyl-sphingomyelin was the most effective, followed by palmitoyl-sphingomyelin and lignoceroyl-sphingomyelin. Activity was demonstrated only for sphingomyelin with a saturated fatty acid and not for that with an unsaturated fatty acid, regardless of the length of the acyl group. In Pan troglodytes (Chimpanzee), this protein is Galactosylgalactosylxylosylprotein 3-beta-glucuronosyltransferase 1.